The sequence spans 131 residues: uncharacterized protein (131 aa).

The helical transmembrane segment at Val17–Leu39 threads the bilayer.

The protein resides in the membrane. This is an uncharacterized protein from Archaeoglobus fulgidus (strain ATCC 49558 / DSM 4304 / JCM 9628 / NBRC 100126 / VC-16).